The primary structure comprises 155 residues: Small ribosomal subunit protein uS7cz/uS7cy (155 aa).

Belongs to the universal ribosomal protein uS7 family. As to quaternary structure, part of the 30S ribosomal subunit.

It is found in the plastid. The protein localises to the chloroplast. Functionally, one of the primary rRNA binding proteins, it binds directly to 16S rRNA where it nucleates assembly of the head domain of the 30S subunit. The chain is Small ribosomal subunit protein uS7cz/uS7cy (rps7-A) from Amborella trichopoda.